The primary structure comprises 227 residues: Type II restriction enzyme ScaI (227 aa).

Residues 12–35 form a disordered region; that stretch reads EARVGTRTGGPAMRPKTSDSPYFG.

It carries out the reaction Endonucleolytic cleavage of DNA to give specific double-stranded fragments with terminal 5'-phosphates.. Its function is as follows. A P subtype restriction enzyme that recognizes the double-stranded sequence 5'-AGTACT-3' and cleaves after T-3. The sequence is that of Type II restriction enzyme ScaI from Streptomyces caespitosus.